Reading from the N-terminus, the 125-residue chain is Large-conductance mechanosensitive channel (125 aa).

3 consecutive transmembrane segments (helical) span residues 19–39 (VGVI…SNLI), 42–62 (LIGI…IGSA), and 67–87 (GSFL…FLMV).

Belongs to the MscL family. As to quaternary structure, homopentamer.

The protein localises to the cell membrane. Channel that opens in response to stretch forces in the membrane lipid bilayer. May participate in the regulation of osmotic pressure changes within the cell. This chain is Large-conductance mechanosensitive channel, found in Limosilactobacillus fermentum (strain NBRC 3956 / LMG 18251) (Lactobacillus fermentum).